We begin with the raw amino-acid sequence, 288 residues long: MKNYSFTFDIPQLRKLKKIYKSFLIEKEINNNSIYFFLKKDNIQMIAYNNGTFFIKGENIQEEILNIKEILNIKDYSAIGSDEVGTGDVFGSIVVCSSYVSAENIPFLENLNIKDSKKLTDEKIIQLVPKIINKITYSLISINPYKYNILTNKGFNLNKIKAILHNDMILKNLIKIKKNVNVILDKFTSSKNYFNYLKNEKKVYKKIFFCNKAEKVHISVAAASIIARYAFLKNIFALSKKIGINLKLGASTEVDKQINFIYKKYGMNILKKIAKCNFKNITKQFIKN.

Residues 76 to 288 (YSAIGSDEVG…KNITKQFIKN (213 aa)) form the RNase H type-2 domain. A divalent metal cation is bound by residues D82, E83, and D185.

It belongs to the RNase HII family. RnhC subfamily. Mn(2+) serves as cofactor. Mg(2+) is required as a cofactor.

The protein resides in the cytoplasm. It carries out the reaction Endonucleolytic cleavage to 5'-phosphomonoester.. In terms of biological role, endonuclease that specifically degrades the RNA of RNA-DNA hybrids. This chain is Ribonuclease HIII, found in Phytoplasma mali (strain AT).